The sequence spans 212 residues: Ribonuclease HII (212 aa).

In terms of domain architecture, RNase H type-2 spans 17–206 (RVIAGVDEAG…KSTKPQSLQT (190 aa)). 3 residues coordinate a divalent metal cation: D23, E24, and D115.

The protein belongs to the RNase HII family. The cofactor is Mn(2+). Requires Mg(2+) as cofactor.

The protein resides in the cytoplasm. It catalyses the reaction Endonucleolytic cleavage to 5'-phosphomonoester.. Its function is as follows. Endonuclease that specifically degrades the RNA of RNA-DNA hybrids. The protein is Ribonuclease HII of Syntrophus aciditrophicus (strain SB).